A 192-amino-acid chain; its full sequence is Sporulation initiation phosphotransferase B (192 aa).

H30 carries the phosphohistidine modification.

As to quaternary structure, homodimer. Dimerization is essential for activity as both monomers contribute to the formation of the active site. Phosphorylated by spo0F.

It is found in the cytoplasm. Its function is as follows. Key element in the phosphorelay regulating sporulation initiation. Acts on spo0A. Mediates reversible phosphoryl transfer from spo0F to spo0A. This is Sporulation initiation phosphotransferase B (spo0B) from Bacillus subtilis (strain 168).